The chain runs to 678 residues: MGKIHELSSVLADQIAAGEVVERPASVVKELVENAVDAHATQVDILVQESGVQSIRVIDDGDGIDDAEVLTAFKRHATSKITSREDLFRVHSLGFRGEALPSIASVADVVMNTSTGATGTSIHYRGGKLLQQSPAPLRQGTDITVTDLFFNTPARLKYLKSPQTELANILDVVNRIALSYPAVAFRLVHNAKELLKTAGRGDLQQVIAGIYGVQNARKMVAIQGSTTDFKLSGFVALPELTRASRQYITVLINGRAIKNQQLTKAVIKGYGSKLMVGRYPIAVIALTMDPLLVDVNVHPTKQEVRLSKEPELAKLVSTTITDRLVDVNLIPSALTNLGSHRREHLNTDQLAMDLNAVSSQYQVADKTTPASTEQFAASLAAATMQPSSATTMVSTTSAQPSAVNRAAVSAVVPSESAASSANQPIMISHRDELTATPVQAFDQRYQSESGALPFGETAEPLETSTAASAPTSEAPDTERFPQLRYLGQMHGTYLLAEADDGMYILDQHAAQERINYEYYRQAIGEVSADQQNLLVPIILDYPTSDVLKIKEKLPLLAELGIHLESFGGNSFIVHAHPTWFKAGQEEDTIREMIDWLLQDDKLTVAQFREKSAIMMSCKRAIKANHHLDDQQARALLAKLPTCENPFNCPHGRPVTVHFTNSDMERMFKRIQDSHEARD.

This sequence belongs to the DNA mismatch repair MutL/HexB family.

This protein is involved in the repair of mismatches in DNA. It is required for dam-dependent methyl-directed DNA mismatch repair. May act as a 'molecular matchmaker', a protein that promotes the formation of a stable complex between two or more DNA-binding proteins in an ATP-dependent manner without itself being part of a final effector complex. The polypeptide is DNA mismatch repair protein MutL (Lactiplantibacillus plantarum (strain ATCC BAA-793 / NCIMB 8826 / WCFS1) (Lactobacillus plantarum)).